A 430-amino-acid polypeptide reads, in one-letter code: UDP-N-acetylmuramoylalanine--D-glutamate ligase (430 aa).

Residue 109–115 (GTDGKST) coordinates ATP.

It belongs to the MurCDEF family.

Its subcellular location is the cytoplasm. The enzyme catalyses UDP-N-acetyl-alpha-D-muramoyl-L-alanine + D-glutamate + ATP = UDP-N-acetyl-alpha-D-muramoyl-L-alanyl-D-glutamate + ADP + phosphate + H(+). The protein operates within cell wall biogenesis; peptidoglycan biosynthesis. Cell wall formation. Catalyzes the addition of glutamate to the nucleotide precursor UDP-N-acetylmuramoyl-L-alanine (UMA). In Thermotoga maritima (strain ATCC 43589 / DSM 3109 / JCM 10099 / NBRC 100826 / MSB8), this protein is UDP-N-acetylmuramoylalanine--D-glutamate ligase.